Here is a 599-residue protein sequence, read N- to C-terminus: Aspartate--tRNA(Asp/Asn) ligase (599 aa).

Residue E174 coordinates L-aspartate. The interval Q198–K201 is aspartate. R220 lines the L-aspartate pocket. ATP is bound by residues R220 to E222 and Q229. Residue H457 coordinates L-aspartate. Residue E491 coordinates ATP. Position 498 (R498) interacts with L-aspartate. Residue G543–R546 participates in ATP binding.

Belongs to the class-II aminoacyl-tRNA synthetase family. Type 1 subfamily. In terms of assembly, homodimer.

The protein localises to the cytoplasm. It carries out the reaction tRNA(Asx) + L-aspartate + ATP = L-aspartyl-tRNA(Asx) + AMP + diphosphate. In terms of biological role, aspartyl-tRNA synthetase with relaxed tRNA specificity since it is able to aspartylate not only its cognate tRNA(Asp) but also tRNA(Asn). Reaction proceeds in two steps: L-aspartate is first activated by ATP to form Asp-AMP and then transferred to the acceptor end of tRNA(Asp/Asn). The sequence is that of Aspartate--tRNA(Asp/Asn) ligase from Paraburkholderia phymatum (strain DSM 17167 / CIP 108236 / LMG 21445 / STM815) (Burkholderia phymatum).